Consider the following 218-residue polypeptide: Large ribosomal subunit protein uL1 (218 aa).

It belongs to the universal ribosomal protein uL1 family. Part of the 50S ribosomal subunit.

Probably involved in E site tRNA release. Binds directly to 23S rRNA. Functionally, protein L1 is also a translational repressor protein, it controls the translation of its operon by binding to its mRNA. The chain is Large ribosomal subunit protein uL1 from Saccharolobus solfataricus (strain ATCC 35092 / DSM 1617 / JCM 11322 / P2) (Sulfolobus solfataricus).